The sequence spans 466 residues: Asparagine--tRNA ligase (466 aa).

This sequence belongs to the class-II aminoacyl-tRNA synthetase family. Homodimer.

The protein resides in the cytoplasm. It catalyses the reaction tRNA(Asn) + L-asparagine + ATP = L-asparaginyl-tRNA(Asn) + AMP + diphosphate + H(+). The polypeptide is Asparagine--tRNA ligase (Shewanella sp. (strain ANA-3)).